We begin with the raw amino-acid sequence, 96 residues long: Small ribosomal subunit protein bS20 (96 aa).

The protein belongs to the bacterial ribosomal protein bS20 family.

Functionally, binds directly to 16S ribosomal RNA. The sequence is that of Small ribosomal subunit protein bS20 from Thermotoga petrophila (strain ATCC BAA-488 / DSM 13995 / JCM 10881 / RKU-1).